Here is a 149-residue protein sequence, read N- to C-terminus: Nucleoside diphosphate kinase (149 aa).

ATP-binding residues include Lys9, Phe57, Arg85, Thr91, Arg102, and Asn112. Residue His115 is the Pros-phosphohistidine intermediate of the active site.

The protein belongs to the NDK family. Homotetramer. Mg(2+) serves as cofactor.

Its subcellular location is the cytoplasm. It catalyses the reaction a 2'-deoxyribonucleoside 5'-diphosphate + ATP = a 2'-deoxyribonucleoside 5'-triphosphate + ADP. It carries out the reaction a ribonucleoside 5'-diphosphate + ATP = a ribonucleoside 5'-triphosphate + ADP. Major role in the synthesis of nucleoside triphosphates other than ATP. The ATP gamma phosphate is transferred to the NDP beta phosphate via a ping-pong mechanism, using a phosphorylated active-site intermediate. This chain is Nucleoside diphosphate kinase, found in Desulfitobacterium hafniense (strain DSM 10664 / DCB-2).